We begin with the raw amino-acid sequence, 716 residues long: Iron-sulfur clusters transporter atm1, mitochondrial (716 aa).

Residues 1 to 18 (MAPSIKLSTMATSLHRAH) constitute a mitochondrion transit peptide. Over 19 to 123 (GTSALLRRPR…PKGSWGDKAR (105 aa)) the chain is Mitochondrial matrix. The tract at residues 57 to 87 (LFAPNGSAKDESKPAVSTVPKTTGRGPSDPL) is disordered. A helical membrane pass occupies residues 124-145 (VLLAIGLLVGGKVLNVQVPFYF). The ABC transmembrane type-1 domain occupies 124–414 (VLLAIGLLVG…LGSVYRELRQ (291 aa)). Over 146–168 (REIVDSLNIDFSTTGGSVTAVAG) the chain is Mitochondrial intermembrane. A helical transmembrane segment spans residues 169 to 192 (AMILGYGAARVGAVVSQELRNAVF). The Mitochondrial matrix portion of the chain corresponds to 193 to 241 (ASVAQKAIRKVARNTFEHLLNLDLSFHLSKQTGGLTRAIDRGTKGISFL). A helical transmembrane segment spans residues 242–265 (LTSMVFHIVPTALEISMVCGILTY). Position 266 (Asn-266) is a topological domain, mitochondrial intermembrane. A helical transmembrane segment spans residues 267–287 (FGWQYAALTALTMVSYTAFTI). Topologically, residues 288-353 (LTTAWRTKFR…NSIKVATSLA (66 aa)) are mitochondrial matrix. Residues 293–297 (RTKFR) and 356–359 (NSGQ) each bind glutathione. Residues 354 to 372 (FLNSGQNIIFSSALTVMMY) form a helical membrane-spanning segment. Residues 373–387 (MGAHGVATGQLTVGD) lie on the Mitochondrial intermembrane side of the membrane. A helical transmembrane segment spans residues 388 to 409 (LVLINQLVFQLSVPLNFLGSVY). Residue Gly-406 participates in glutathione binding. Topologically, residues 410–716 (RELRQSLLDM…KEEVGEKKEA (307 aa)) are mitochondrial matrix. The region spanning 449–690 (IEFKDVTFGY…NGVYAQLWRA (242 aa)) is the ABC transporter domain. Residues Tyr-458 and 482-493 (GPSGCGKSTLLR) contribute to the ATP site. The tract at residues 697 to 716 (EEGEVSKKGEKEEVGEKKEA) is disordered. Positions 700 to 716 (EVSKKGEKEEVGEKKEA) are enriched in basic and acidic residues.

Belongs to the ABC transporter superfamily. ABCB family. Heavy Metal importer (TC 3.A.1.210) subfamily. In terms of assembly, homodimer.

The protein localises to the mitochondrion inner membrane. Performs an essential function in the generation of cytoplasmic iron-sulfur proteins by mediating the ATP-dependent export of Fe/S cluster precursors synthesized by egt-3 and other mitochondrial proteins. Hydrolyzes ATP. Binds glutathione and may function by transporting a glutathione-conjugated iron-sulfur compound. The sequence is that of Iron-sulfur clusters transporter atm1, mitochondrial from Neurospora crassa (strain ATCC 24698 / 74-OR23-1A / CBS 708.71 / DSM 1257 / FGSC 987).